Consider the following 208-residue polypeptide: 7-carboxy-7-deazaguanine synthase (208 aa).

Substrate is bound by residues 23 to 25 (LQG) and Arg-38. A Radical SAM core domain is found at 29-208 (WAGGNAFFIR…LQTHKYLGVR (180 aa)). [4Fe-4S] cluster-binding residues include Cys-42, Cys-46, and Cys-49. Thr-83 is a binding site for substrate. S-adenosyl-L-methionine contacts are provided by residues Gly-85 and 126 to 128 (SPK).

Belongs to the radical SAM superfamily. 7-carboxy-7-deazaguanine synthase family. In terms of assembly, homodimer. [4Fe-4S] cluster is required as a cofactor. Requires S-adenosyl-L-methionine as cofactor. Mg(2+) serves as cofactor.

The catalysed reaction is 6-carboxy-5,6,7,8-tetrahydropterin + H(+) = 7-carboxy-7-deazaguanine + NH4(+). The protein operates within purine metabolism; 7-cyano-7-deazaguanine biosynthesis. Its function is as follows. Catalyzes the complex heterocyclic radical-mediated conversion of 6-carboxy-5,6,7,8-tetrahydropterin (CPH4) to 7-carboxy-7-deazaguanine (CDG), a step common to the biosynthetic pathways of all 7-deazapurine-containing compounds. The sequence is that of 7-carboxy-7-deazaguanine synthase from Synechocystis sp. (strain ATCC 27184 / PCC 6803 / Kazusa).